The sequence spans 542 residues: CTP synthase (542 aa).

An amidoligase domain region spans residues 1–265 (MARYIFITGG…DQEVLAAFGI (265 aa)). Residue Ser-13 participates in CTP binding. Residue Ser-13 participates in UTP binding. ATP is bound at residue 14 to 19 (SLGKGL). L-glutamine is bound at residue Tyr-54. Asp-71 contacts ATP. Residues Asp-71 and Glu-139 each contribute to the Mg(2+) site. CTP-binding positions include 146–148 (DIE), 186–191 (KTKPTQ), and Lys-222. UTP is bound by residues 186-191 (KTKPTQ) and Lys-222. 238–240 (RDV) is an ATP binding site. In terms of domain architecture, Glutamine amidotransferase type-1 spans 291–541 (TIAIVGKYTG…IAAALEQSRL (251 aa)). Position 353 (Gly-353) interacts with L-glutamine. The Nucleophile; for glutamine hydrolysis role is filled by Cys-380. L-glutamine contacts are provided by residues 381-384 (FGMQ), Glu-404, and Arg-469. Catalysis depends on residues His-514 and Glu-516.

It belongs to the CTP synthase family. Homotetramer.

It carries out the reaction UTP + L-glutamine + ATP + H2O = CTP + L-glutamate + ADP + phosphate + 2 H(+). It catalyses the reaction L-glutamine + H2O = L-glutamate + NH4(+). The enzyme catalyses UTP + NH4(+) + ATP = CTP + ADP + phosphate + 2 H(+). It functions in the pathway pyrimidine metabolism; CTP biosynthesis via de novo pathway; CTP from UDP: step 2/2. Allosterically activated by GTP, when glutamine is the substrate; GTP has no effect on the reaction when ammonia is the substrate. The allosteric effector GTP functions by stabilizing the protein conformation that binds the tetrahedral intermediate(s) formed during glutamine hydrolysis. Inhibited by the product CTP, via allosteric rather than competitive inhibition. In terms of biological role, catalyzes the ATP-dependent amination of UTP to CTP with either L-glutamine or ammonia as the source of nitrogen. Regulates intracellular CTP levels through interactions with the four ribonucleotide triphosphates. In Methylocella silvestris (strain DSM 15510 / CIP 108128 / LMG 27833 / NCIMB 13906 / BL2), this protein is CTP synthase.